A 133-amino-acid chain; its full sequence is Small ribosomal subunit protein uS8 (133 aa).

Belongs to the universal ribosomal protein uS8 family. As to quaternary structure, part of the 30S ribosomal subunit. Contacts proteins S5 and S12.

Functionally, one of the primary rRNA binding proteins, it binds directly to 16S rRNA central domain where it helps coordinate assembly of the platform of the 30S subunit. The protein is Small ribosomal subunit protein uS8 of Protochlamydia amoebophila (strain UWE25).